Reading from the N-terminus, the 362-residue chain is Histidine biosynthesis bifunctional protein HisB (362 aa).

The tract at residues M1–P173 is histidinol-phosphatase. The active-site Nucleophile is the D8. Positions 8 and 10 each coordinate Mg(2+). The Proton donor role is filled by D10. Positions 91, 93, 99, and 101 each coordinate Zn(2+). D128 is a binding site for Mg(2+). The tract at residues R174–L362 is imidazoleglycerol-phosphate dehydratase.

This sequence in the N-terminal section; belongs to the histidinol-phosphatase family. The protein in the C-terminal section; belongs to the imidazoleglycerol-phosphate dehydratase family. Mg(2+) serves as cofactor. It depends on Zn(2+) as a cofactor.

Its subcellular location is the cytoplasm. The catalysed reaction is D-erythro-1-(imidazol-4-yl)glycerol 3-phosphate = 3-(imidazol-4-yl)-2-oxopropyl phosphate + H2O. The enzyme catalyses L-histidinol phosphate + H2O = L-histidinol + phosphate. It functions in the pathway amino-acid biosynthesis; L-histidine biosynthesis; L-histidine from 5-phospho-alpha-D-ribose 1-diphosphate: step 6/9. The protein operates within amino-acid biosynthesis; L-histidine biosynthesis; L-histidine from 5-phospho-alpha-D-ribose 1-diphosphate: step 8/9. The sequence is that of Histidine biosynthesis bifunctional protein HisB from Haemophilus influenzae (strain 86-028NP).